Reading from the N-terminus, the 125-residue chain is Holo-[acyl-carrier-protein] synthase (125 aa).

Mg(2+) contacts are provided by Asp8 and Glu57.

This sequence belongs to the P-Pant transferase superfamily. AcpS family. The cofactor is Mg(2+).

It localises to the cytoplasm. It catalyses the reaction apo-[ACP] + CoA = holo-[ACP] + adenosine 3',5'-bisphosphate + H(+). In terms of biological role, transfers the 4'-phosphopantetheine moiety from coenzyme A to a Ser of acyl-carrier-protein. The sequence is that of Holo-[acyl-carrier-protein] synthase from Neisseria meningitidis serogroup A / serotype 4A (strain DSM 15465 / Z2491).